The primary structure comprises 392 residues: Imidazolonepropionase (392 aa).

Residues His-70 and His-72 each coordinate Fe(3+). His-70 and His-72 together coordinate Zn(2+). 3 residues coordinate 4-imidazolone-5-propanoate: Arg-79, Tyr-137, and His-164. Tyr-137 serves as a coordination point for N-formimidoyl-L-glutamate. Fe(3+) is bound at residue His-227. His-227 is a binding site for Zn(2+). Gln-230 contributes to the 4-imidazolone-5-propanoate binding site. Asp-301 provides a ligand contact to Fe(3+). Residue Asp-301 coordinates Zn(2+). N-formimidoyl-L-glutamate-binding residues include Asn-303 and Gly-305. Thr-306 is a 4-imidazolone-5-propanoate binding site.

It belongs to the metallo-dependent hydrolases superfamily. HutI family. It depends on Zn(2+) as a cofactor. Requires Fe(3+) as cofactor.

The protein resides in the cytoplasm. The enzyme catalyses 4-imidazolone-5-propanoate + H2O = N-formimidoyl-L-glutamate. Its pathway is amino-acid degradation; L-histidine degradation into L-glutamate; N-formimidoyl-L-glutamate from L-histidine: step 3/3. Catalyzes the hydrolytic cleavage of the carbon-nitrogen bond in imidazolone-5-propanoate to yield N-formimidoyl-L-glutamate. It is the third step in the universal histidine degradation pathway. The protein is Imidazolonepropionase of Nocardia farcinica (strain IFM 10152).